The following is a 616-amino-acid chain: Chaperone protein HscA (616 aa).

The protein belongs to the heat shock protein 70 family.

Its function is as follows. Chaperone involved in the maturation of iron-sulfur cluster-containing proteins. Has a low intrinsic ATPase activity which is markedly stimulated by HscB. Involved in the maturation of IscU. This Escherichia coli (strain SMS-3-5 / SECEC) protein is Chaperone protein HscA.